Consider the following 179-residue polypeptide: ATP synthase subunit delta (179 aa).

Belongs to the ATPase delta chain family. As to quaternary structure, F-type ATPases have 2 components, F(1) - the catalytic core - and F(0) - the membrane proton channel. F(1) has five subunits: alpha(3), beta(3), gamma(1), delta(1), epsilon(1). F(0) has three main subunits: a(1), b(2) and c(10-14). The alpha and beta chains form an alternating ring which encloses part of the gamma chain. F(1) is attached to F(0) by a central stalk formed by the gamma and epsilon chains, while a peripheral stalk is formed by the delta and b chains.

It is found in the cell inner membrane. In terms of biological role, f(1)F(0) ATP synthase produces ATP from ADP in the presence of a proton or sodium gradient. F-type ATPases consist of two structural domains, F(1) containing the extramembraneous catalytic core and F(0) containing the membrane proton channel, linked together by a central stalk and a peripheral stalk. During catalysis, ATP synthesis in the catalytic domain of F(1) is coupled via a rotary mechanism of the central stalk subunits to proton translocation. Its function is as follows. This protein is part of the stalk that links CF(0) to CF(1). It either transmits conformational changes from CF(0) to CF(1) or is implicated in proton conduction. The polypeptide is ATP synthase subunit delta (Bordetella petrii (strain ATCC BAA-461 / DSM 12804 / CCUG 43448)).